Here is a 300-residue protein sequence, read N- to C-terminus: Geranylgeranyl pyrophosphate synthase (300 aa).

N-acetylmethionine is present on Met-1. Residues Lys-25, Arg-28, and His-57 each coordinate isopentenyl diphosphate. The Mg(2+) site is built by Asp-64 and Asp-68. Arg-73 serves as a coordination point for dimethylallyl diphosphate. Arg-74 lines the isopentenyl diphosphate pocket. Dimethylallyl diphosphate-binding residues include Lys-151, Thr-152, Gln-185, Lys-202, and Lys-212.

It belongs to the FPP/GGPP synthase family. As to quaternary structure, homohexamer; trimer of homodimers. It depends on Mg(2+) as a cofactor.

It is found in the cytoplasm. It localises to the perinuclear region. Its subcellular location is the myofibril. The protein resides in the sarcomere. The protein localises to the z line. It carries out the reaction isopentenyl diphosphate + dimethylallyl diphosphate = (2E)-geranyl diphosphate + diphosphate. The catalysed reaction is isopentenyl diphosphate + (2E)-geranyl diphosphate = (2E,6E)-farnesyl diphosphate + diphosphate. The enzyme catalyses isopentenyl diphosphate + (2E,6E)-farnesyl diphosphate = (2E,6E,10E)-geranylgeranyl diphosphate + diphosphate. The protein operates within isoprenoid biosynthesis; farnesyl diphosphate biosynthesis; farnesyl diphosphate from geranyl diphosphate and isopentenyl diphosphate: step 1/1. Its pathway is isoprenoid biosynthesis; geranyl diphosphate biosynthesis; geranyl diphosphate from dimethylallyl diphosphate and isopentenyl diphosphate: step 1/1. It functions in the pathway isoprenoid biosynthesis; geranylgeranyl diphosphate biosynthesis; geranylgeranyl diphosphate from farnesyl diphosphate and isopentenyl diphosphate: step 1/1. In terms of biological role, catalyzes the trans-addition of the three molecules of IPP onto DMAPP to form geranylgeranyl pyrophosphate, an important precursor of carotenoids and geranylated proteins. This Bos taurus (Bovine) protein is Geranylgeranyl pyrophosphate synthase (GGPS1).